The following is a 68-amino-acid chain: Antimicrobial peptide UyCT5 (68 aa).

An N-terminal signal peptide occupies residues 1–23 (MKNQFAILLLAVVFLQLISQSDA). Leucine amide is present on leucine 36. A propeptide spanning residues 40–68 (GLKNADRLDELFDGDISDADLDFLRELMR) is cleaved from the precursor.

Belongs to the non-disulfide-bridged peptide (NDBP) superfamily. Short antimicrobial peptide (group 4) family. As to expression, expressed by the venom gland.

The protein resides in the secreted. Its subcellular location is the target cell membrane. In terms of biological role, antimicrobial peptide that inhibits the growth of Gram-positive (S.aureus, MIC=1 uM) and Gram-negative bacteria (E.coli, MIC=15 uM and P.aeruginosa, MIC=2 uM). It also shows 37% of hemolysis when 15 uM are tested (93% at 50 uM). The sequence is that of Antimicrobial peptide UyCT5 from Urodacus yaschenkoi (Inland robust scorpion).